Consider the following 603-residue polypeptide: Elongation factor 4 (603 aa).

The tr-type G domain maps to 7-189 (SRLRNFCIIA…AVVDRIPSPK (183 aa)). Residues 19–24 (DHGKST) and 136–139 (NKVD) each bind GTP.

It belongs to the TRAFAC class translation factor GTPase superfamily. Classic translation factor GTPase family. LepA subfamily.

The protein resides in the cell inner membrane. It carries out the reaction GTP + H2O = GDP + phosphate + H(+). Functionally, required for accurate and efficient protein synthesis under certain stress conditions. May act as a fidelity factor of the translation reaction, by catalyzing a one-codon backward translocation of tRNAs on improperly translocated ribosomes. Back-translocation proceeds from a post-translocation (POST) complex to a pre-translocation (PRE) complex, thus giving elongation factor G a second chance to translocate the tRNAs correctly. Binds to ribosomes in a GTP-dependent manner. This is Elongation factor 4 from Prochlorococcus marinus (strain NATL1A).